Here is a 904-residue protein sequence, read N- to C-terminus: Anoctamin-5 (904 aa).

Residues 1–290 (MVEQEGLTAK…HLIRNYFGEK (290 aa)) are Cytoplasmic-facing. A helical membrane pass occupies residues 291–311 (IGIYFVFLGYYTEMLLFAALV). Residues 312 to 371 (GLACFIYGLLSMENNRTSTEICDPDIGGQMIMCPLCDEVCDYWRLNTTCLHSKFSHLFDN) lie on the Extracellular side of the membrane. Asparagine 326, asparagine 357, and asparagine 371 each carry an N-linked (GlcNAc...) asparagine glycan. Residues 372–392 (ESTVFFALFMGIWVTLFLEFW) form a helical membrane-spanning segment. The Cytoplasmic portion of the chain corresponds to 393–453 (KQRQARLEYE…CHRIPWYFVS (61 aa)). A helical membrane pass occupies residues 454 to 474 (GTTVTFGMALLLSSMVSILIY). Residues 475-502 (RLSVFATFASFMESEATLQSVKSFFTPQ) lie on the Extracellular side of the membrane. The helical transmembrane segment at 503–523 (LATALSGSCLNCIVILILNFF) threads the bilayer. Residues 524-548 (YEKISAWITKMEIPRTHQEYESSLT) are Cytoplasmic-facing. The helical transmembrane segment at 549–569 (LKMFLFQFVNYYSSCFYVAFF) threads the bilayer. Residues 570–667 (KGKFVGYPGS…RGLFYEYLET (98 aa)) lie on the Extracellular side of the membrane. The helical transmembrane segment at 668–688 (VIQFGFATLFVASFPLAPLFA) threads the bilayer. At 689-723 (LMNNIMGIRVDAWKLTTQYRRPVAAKAHSIGVWQD) the chain is on the cytoplasmic side. A helical membrane pass occupies residues 724 to 744 (ILFGMAIVSVATNAFIVSFTS). Residues 745-825 (DIIPRLVYFY…FWHVLAAKMT (81 aa)) lie on the Extracellular side of the membrane. Asparagine 759, asparagine 769, and asparagine 782 each carry an N-linked (GlcNAc...) asparagine glycan. A helical membrane pass occupies residues 826–846 (FIIVMEHVVFLFKFLLAWLIP). Residues 847-904 (DVPKDVVEKIKREKLMTIKIIHDFELNKLKENLDVEYGNIMKNVLVDEDNSLKAKTTV) are Cytoplasmic-facing.

The protein belongs to the anoctamin family. As to expression, highly expressed in skeletal muscle, bone tissues and thyroid gland.

It is found in the endoplasmic reticulum membrane. The protein localises to the cell membrane. Plays a role in plasma membrane repair in a process involving annexins. Does not exhibit calcium-activated chloride channel (CaCC) activity. This Mus musculus (Mouse) protein is Anoctamin-5 (Ano5).